Consider the following 408-residue polypeptide: Cytotoxic granule-associated RNA binding protein tiar-1 (408 aa).

RRM domains lie at 46 to 121 (RTLY…WAVE), 135 to 213 (FHVF…WATR), and 241 to 312 (TSVY…WGKT).

In terms of tissue distribution, expressed in the germline and also in somatic tissues. Expressed in Ggonads and oocytes. Expression is slightly reduced in the most proximal oocytes, especially the -1 oocyte. Aggregates mostly in the head neurons, muscles, intestine, vulval and hypodermal cells during heat shock. Expressed only in the intestine as a response to heat shock, starvation and dietary restriction.

It localises to the cytoplasm. The protein resides in the nucleus. Its subcellular location is the stress granule. Acts downstream of ced-9 in the induction of germline apoptosis under different stress conditions including starvation, osmotic, oxidative, heat shock and UV stress. Plays a role in the formation of stress granules in response to heat shock and oxidative stress but not in response to osmotic stress. Required for the formation of stress granules in the core gonad but may not play a critical role in this process in the oocytes. Plays an important role in the formation of stress granules in the embryo. Protects female germ cells and embryos from heat shock. The chain is Cytotoxic granule-associated RNA binding protein tiar-1 from Caenorhabditis elegans.